Reading from the N-terminus, the 673-residue chain is Glycine--tRNA ligase beta subunit (673 aa).

The protein belongs to the class-II aminoacyl-tRNA synthetase family. In terms of assembly, tetramer of two alpha and two beta subunits.

It is found in the cytoplasm. The catalysed reaction is tRNA(Gly) + glycine + ATP = glycyl-tRNA(Gly) + AMP + diphosphate. This Lactococcus lactis subsp. cremoris (strain MG1363) protein is Glycine--tRNA ligase beta subunit.